A 371-amino-acid chain; its full sequence is Cathepsin L1 (371 aa).

An N-terminal signal peptide occupies residues 1-48 (MNHLGVFETRFRPRTRHKSQRAQLIPEQITMRTAVLLPLLALLAVAQA). Residues 49–153 (VSFADVVMEE…VTFISPAHVT (105 aa)) constitute a propeptide, activation peptide. Asn-127 carries N-linked (GlcNAc...) asparagine glycosylation. 3 cysteine pairs are disulfide-bonded: Cys-175–Cys-218, Cys-209–Cys-251, and Cys-310–Cys-360. Residue Cys-178 is part of the active site. Residue His-317 is part of the active site. Positions 327–329 (DES) are excised as a propeptide. The active site involves Asn-338.

This sequence belongs to the peptidase C1 family. Dimer of a heavy and a light chain linked by disulfide bonds. In terms of tissue distribution, in the embryo, predominantly expressed in the midgut. Also expressed in larval alimentary organs such as salivary gland and midgut including gastric caeca.

The protein resides in the lysosome. It catalyses the reaction Specificity close to that of papain. As compared to cathepsin B, cathepsin L exhibits higher activity toward protein substrates, but has little activity on Z-Arg-Arg-NHMec, and no peptidyl-dipeptidase activity.. In terms of biological role, important for the overall degradation of proteins in lysosomes. Essential for adult male and female fertility. May play a role in digestion. This chain is Cathepsin L1, found in Drosophila melanogaster (Fruit fly).